Reading from the N-terminus, the 455-residue chain is Bifunctional protein GlmU (455 aa).

A pyrophosphorylase region spans residues 1–226 (MSLEIVILAA…PMEVQGANDR (226 aa)). UDP-N-acetyl-alpha-D-glucosamine contacts are provided by residues 8–11 (LAAG), lysine 22, glutamine 73, 78–79 (GT), 99–101 (YGD), glycine 136, glutamate 151, asparagine 166, and asparagine 224. Aspartate 101 serves as a coordination point for Mg(2+). A Mg(2+)-binding site is contributed by asparagine 224. Positions 227–247 (KQLSELERHYQLRAGRRLMAQ) are linker. An N-acetyltransferase region spans residues 248–455 (GVTLRDPARF…WKRPEKIKKN (208 aa)). UDP-N-acetyl-alpha-D-glucosamine contacts are provided by arginine 330 and lysine 348. Histidine 360 acts as the Proton acceptor in catalysis. Residues tyrosine 363 and asparagine 374 each coordinate UDP-N-acetyl-alpha-D-glucosamine. Residues alanine 377, 383–384 (NY), serine 402, alanine 420, and arginine 437 each bind acetyl-CoA.

It in the N-terminal section; belongs to the N-acetylglucosamine-1-phosphate uridyltransferase family. This sequence in the C-terminal section; belongs to the transferase hexapeptide repeat family. In terms of assembly, homotrimer. Mg(2+) serves as cofactor.

The protein localises to the cytoplasm. The catalysed reaction is alpha-D-glucosamine 1-phosphate + acetyl-CoA = N-acetyl-alpha-D-glucosamine 1-phosphate + CoA + H(+). It carries out the reaction N-acetyl-alpha-D-glucosamine 1-phosphate + UTP + H(+) = UDP-N-acetyl-alpha-D-glucosamine + diphosphate. It participates in nucleotide-sugar biosynthesis; UDP-N-acetyl-alpha-D-glucosamine biosynthesis; N-acetyl-alpha-D-glucosamine 1-phosphate from alpha-D-glucosamine 6-phosphate (route II): step 2/2. It functions in the pathway nucleotide-sugar biosynthesis; UDP-N-acetyl-alpha-D-glucosamine biosynthesis; UDP-N-acetyl-alpha-D-glucosamine from N-acetyl-alpha-D-glucosamine 1-phosphate: step 1/1. Its pathway is bacterial outer membrane biogenesis; LPS lipid A biosynthesis. Functionally, catalyzes the last two sequential reactions in the de novo biosynthetic pathway for UDP-N-acetylglucosamine (UDP-GlcNAc). The C-terminal domain catalyzes the transfer of acetyl group from acetyl coenzyme A to glucosamine-1-phosphate (GlcN-1-P) to produce N-acetylglucosamine-1-phosphate (GlcNAc-1-P), which is converted into UDP-GlcNAc by the transfer of uridine 5-monophosphate (from uridine 5-triphosphate), a reaction catalyzed by the N-terminal domain. In Pseudomonas fluorescens (strain Pf0-1), this protein is Bifunctional protein GlmU.